Here is a 102-residue protein sequence, read N- to C-terminus: Small ribosomal subunit protein uS10 (102 aa).

It belongs to the universal ribosomal protein uS10 family. Part of the 30S ribosomal subunit.

Functionally, involved in the binding of tRNA to the ribosomes. The polypeptide is Small ribosomal subunit protein uS10 (Methylorubrum populi (strain ATCC BAA-705 / NCIMB 13946 / BJ001) (Methylobacterium populi)).